The following is a 484-amino-acid chain: Folate synthesis bifunctional protein (484 aa).

The HPPK stretch occupies residues 15–141 (VIALGSNVGN…PFVLAPLVDL (127 aa)). In terms of domain architecture, Pterin-binding spans 202–470 (TYVMGILNLT…NVRDNVDAAR (269 aa)). The segment at 204–484 (VMGILNLTPD…MMTKRFKNVD (281 aa)) is DHPS. Asn209 contacts Mg(2+). Residues Thr249, Asp286, Asn305, Asp378, Lys423, and 458–460 (RVH) each bind (7,8-dihydropterin-6-yl)methyl diphosphate.

It in the N-terminal section; belongs to the HPPK family. The protein in the C-terminal section; belongs to the DHPS family. The cofactor is Mg(2+). As to expression, expressed exclusively in reproductive tissues.

Its subcellular location is the cytoplasm. It is found in the cytosol. The enzyme catalyses 6-hydroxymethyl-7,8-dihydropterin + ATP = (7,8-dihydropterin-6-yl)methyl diphosphate + AMP + H(+). The catalysed reaction is (7,8-dihydropterin-6-yl)methyl diphosphate + 4-aminobenzoate = 7,8-dihydropteroate + diphosphate. It functions in the pathway cofactor biosynthesis; tetrahydrofolate biosynthesis; 2-amino-4-hydroxy-6-hydroxymethyl-7,8-dihydropteridine diphosphate from 7,8-dihydroneopterin triphosphate: step 4/4. The protein operates within cofactor biosynthesis; tetrahydrofolate biosynthesis; 7,8-dihydrofolate from 2-amino-4-hydroxy-6-hydroxymethyl-7,8-dihydropteridine diphosphate and 4-aminobenzoate: step 1/2. Inhibited by sulfanilamide. In terms of biological role, catalyzes the first two consecutive steps of tetrahydrofolate biosynthesis. Plays a role in seed stress response and survival. In Arabidopsis thaliana (Mouse-ear cress), this protein is Folate synthesis bifunctional protein.